A 109-amino-acid chain; its full sequence is Meiotically up-regulated gene 153 protein (109 aa).

It localises to the mitochondrion. Has a role in meiosis. The protein is Meiotically up-regulated gene 153 protein (mug153) of Schizosaccharomyces pombe (strain 972 / ATCC 24843) (Fission yeast).